A 237-amino-acid polypeptide reads, in one-letter code: Phosphoadenosine 5'-phosphosulfate reductase (237 aa).

C231 (nucleophile; cysteine thiosulfonate intermediate) is an active-site residue.

This sequence belongs to the PAPS reductase family. CysH subfamily.

It localises to the cytoplasm. The enzyme catalyses [thioredoxin]-disulfide + sulfite + adenosine 3',5'-bisphosphate + 2 H(+) = [thioredoxin]-dithiol + 3'-phosphoadenylyl sulfate. Its pathway is sulfur metabolism; hydrogen sulfide biosynthesis; sulfite from sulfate: step 3/3. In terms of biological role, catalyzes the formation of sulfite from phosphoadenosine 5'-phosphosulfate (PAPS) using thioredoxin as an electron donor. The polypeptide is Phosphoadenosine 5'-phosphosulfate reductase (Xylella fastidiosa (strain M23)).